The chain runs to 324 residues: Proto-oncogene Mas (324 aa).

Residues 1-35 (MDQSNMTSLAEEKAMNTSSRNASLGSSHPPIPIVH) are Extracellular-facing. Residues asparagine 5, asparagine 16, and asparagine 21 are each glycosylated (N-linked (GlcNAc...) asparagine). A helical membrane pass occupies residues 36 to 60 (WVIMSISPLGFVENGILLWFLCFRM). Over 61–64 (RRNP) the chain is Cytoplasmic. Residues 65 to 86 (FTVYITHLSIADISLLFCIFIL) form a helical membrane-spanning segment. The Extracellular portion of the chain corresponds to 87–103 (SIDYALDYELSSGHHYT). Residues 104 to 127 (IVTLSVTFLFGYNTGLYLLTAISV) form a helical membrane-spanning segment. Residues 128–148 (ERCLSVLYPIWYRCHRPKHQS) lie on the Cytoplasmic side of the membrane. Residues 149–171 (AFVCALLWALSCLVTTMEYVMCI) traverse the membrane as a helical segment. At 172–184 (DSGEESHSRSDCR) the chain is on the extracellular side. Residues 185-205 (AVIIFIAILSFLVFTPLMLVS) traverse the membrane as a helical segment. Residues 206–223 (STILVVKIRKNTWASHSS) are Cytoplasmic-facing. The helical transmembrane segment at 224 to 244 (KLYIVIMVTIIIFLIFAMPMR) threads the bilayer. Topologically, residues 245–262 (VLYLLYYEYWSAFGNLHN) are extracellular. A helical transmembrane segment spans residues 263–283 (ISLLFSTINSSANPFIYFFVG). The Cytoplasmic portion of the chain corresponds to 284-324 (SSKKKRFRESLKVVLTRAFKDEMQPRRQEGNGNTVSIETVV).

This sequence belongs to the G-protein coupled receptor 1 family. In terms of assembly, interacts with AGTR1. Interacts with FLNA (via filamin repeat 21); increases PKA-mediated phosphorylation of FLNA.

The protein localises to the cell membrane. Acts specifically as a functional antagonist of AGTR1 (angiotensin-2 type 1 receptor), although it up-regulates AGTR1 receptor levels. Positive regulation of AGTR1 levels occurs through activation of the G-proteins GNA11 and GNAQ, and stimulation of the protein kinase C signaling cascade. The antagonist effect on AGTR1 function is probably due to AGTR1 being physically altered by MAS1. Receptor for angiotensin 1-7. The chain is Proto-oncogene Mas (Mas1) from Mus musculus (Mouse).